Consider the following 880-residue polypeptide: Nonsense-mediated mRNA decay factor SMG7-like (880 aa).

TPR repeat units follow at residues 149–183 and 184–217; these read QEQY…NPHN and QLAV…GASN. The disordered stretch occupies residues 669 to 711; that stretch reads RLGLSKPNGLGPIDETGPVSAFDSLSINSSTEHPASSYSPPTP. Residues 691 to 701 are compositionally biased toward polar residues; that stretch reads DSLSINSSTEH.

May play a role in growth and development. This Arabidopsis thaliana (Mouse-ear cress) protein is Nonsense-mediated mRNA decay factor SMG7-like.